A 328-amino-acid polypeptide reads, in one-letter code: UPF0104 membrane protein AF_2231 (328 aa).

6 helical membrane-spanning segments follow: residues 31–51 (NWLL…LWAL), 116–136 (ILDS…TGFS), 139–159 (FGFK…YILY), 221–241 (LVTL…LVAL), 245–265 (AYFL…LVPL), and 277–297 (MAYL…VGLW).

It belongs to the UPF0104 family.

It localises to the cell membrane. The protein is UPF0104 membrane protein AF_2231 of Archaeoglobus fulgidus (strain ATCC 49558 / DSM 4304 / JCM 9628 / NBRC 100126 / VC-16).